Reading from the N-terminus, the 315-residue chain is Olfactory receptor 8J2 (315 aa).

Residues 1–24 are Extracellular-facing; it reads MASGNLTWVTEFILVGVSDDPELQ. An N-linked (GlcNAc...) asparagine glycan is attached at asparagine 5. The helical transmembrane segment at 25 to 45 threads the bilayer; the sequence is IPLFLVFLVLYLLTVAGNLGI. Residues 46-57 are Cytoplasmic-facing; it reads ITLTSVDPQLQT. A helical transmembrane segment spans residues 58 to 78; it reads PMYFFLRHLAIINLCNSTVVA. The Extracellular portion of the chain corresponds to 79–97; it reads PKMLVNFLVTKKTISYYGC. Cysteine 97 and cysteine 179 are disulfide-bonded. The chain crosses the membrane as a helical span at residues 98 to 118; that stretch reads AAQLGGFLVFIVAEIFTLAAM. At 119-143 the chain is on the cytoplasmic side; it reads AYDRYVAIWSPLLYAVVVSPKVCRL. The helical transmembrane segment at 144 to 164 threads the bilayer; that stretch reads LVSLTYLQSLITALTVSSCVF. Residues 165 to 205 lie on the Extracellular side of the membrane; that stretch reads SVSYCSSNIINHFYCDDVPLLALSCSDTYIPETAVFIFSGT. The chain crosses the membrane as a helical span at residues 206-226; that stretch reads NLLFSMIVVLISYFNIVITIL. The Cytoplasmic portion of the chain corresponds to 227 to 239; the sequence is RIRSSEGRQKAFS. The helical transmembrane segment at 240 to 260 threads the bilayer; sequence TCASHMIAVVVFYGTLLFMYL. Topologically, residues 261–271 are extracellular; the sequence is QPRSNHSLDTD. Asparagine 265 is a glycosylation site (N-linked (GlcNAc...) asparagine). A helical transmembrane segment spans residues 272-292; sequence KMASVFYTLVIPVLNPLIYSL. Residues 293–315 lie on the Cytoplasmic side of the membrane; it reads RNKNVKDALKRFLDNPCRSLKLM.

The protein belongs to the G-protein coupled receptor 1 family.

It is found in the membrane. In terms of biological role, odorant receptor. In Homo sapiens (Human), this protein is Olfactory receptor 8J2 (OR8J2).